A 423-amino-acid chain; its full sequence is Putative competence-damage inducible protein (423 aa).

The protein belongs to the CinA family.

The protein is Putative competence-damage inducible protein of Streptococcus pyogenes serotype M1.